The sequence spans 464 residues: Argininosuccinate lyase (464 aa).

Belongs to the lyase 1 family. Argininosuccinate lyase subfamily.

It localises to the cytoplasm. The enzyme catalyses 2-(N(omega)-L-arginino)succinate = fumarate + L-arginine. The protein operates within amino-acid biosynthesis; L-arginine biosynthesis; L-arginine from L-ornithine and carbamoyl phosphate: step 3/3. This chain is Argininosuccinate lyase, found in Pseudomonas putida (strain W619).